The primary structure comprises 373 residues: Glutamine synthetase (373 aa).

Ala-2 is subject to N-acetylalanine. Residues 2–25 are required for glutamine-induced ubiquitination by CRL4(CRBN) and proteasomal degradation; that stretch reads ATSASSHLNKGIKQMYMNLPQGEK. Lys-11 and Lys-14 each carry N6-acetyllysine. A GS beta-grasp domain is found at 24-106; the sequence is EKIQLMYIWV…VFCEVFKYNR (83 aa). Residue Tyr-104 is modified to Phosphotyrosine. The 261-residue stretch at 113–373 folds into the GS catalytic domain; sequence LRHSCKRIMD…TGDEPFQYKN (261 aa). An ATP-binding site is contributed by Glu-134. Mn(2+)-binding residues include Glu-134, Glu-136, Glu-196, and Glu-203. Position 203–208 (203–208) interacts with ATP; it reads EFQIGP. 246-247 contacts L-glutamate; the sequence is NW. Residue His-253 coordinates Mn(2+). Residues 255–257, Arg-319, and Arg-324 contribute to the ATP site; that span reads NFS. Arg-319 lines the L-glutamate pocket. 336 to 338 contributes to the ADP binding site; sequence YFE. Glu-338 contributes to the Mn(2+) binding site. Residue Arg-340 coordinates L-glutamate. Ser-343 bears the Phosphoserine mark.

The protein belongs to the glutamine synthetase family. As to quaternary structure, decamer; composed of two pentamers. Interacts with PALMD. Interacts with RHOJ. Interacts with BEST2; this interaction tethers a fraction of GLUL to the membrane, causing a decrease of cytosolic glutamine synthase (GS) activity and inhibits the chloride channel activity of BEST2 by affecting the gating at the aperture in the absence of intracellular glutamate. Mg(2+) serves as cofactor. The cofactor is Mn(2+). Palmitoylated; undergoes autopalmitoylation. In terms of processing, acetylated by EP300/p300; acetylation is stimulated by increased glutamine levels and promotes ubiquitin-mediated proteasomal degradation. Post-translationally, ubiquitinated by ZNRF1. Ubiquitinated by the DCX (DDB1-CUL4-X-box) E3 ubiquitin-protein ligase complex called CRL4(CRBN), leading to proteasomal degradation. In the adult liver, expression is restricted to a small population of hepatocytes which form only a small rim of one to three hepatocytes around the central veins. Expressed in lung microvascular endothelial cells.

The protein localises to the cytoplasm. Its subcellular location is the cytosol. It is found in the microsome. The protein resides in the mitochondrion. It localises to the cell membrane. It catalyses the reaction L-glutamate + NH4(+) + ATP = L-glutamine + ADP + phosphate + H(+). The catalysed reaction is L-cysteinyl-[protein] + hexadecanoyl-CoA = S-hexadecanoyl-L-cysteinyl-[protein] + CoA. Its activity is regulated as follows. Glutamine synthetase activity is inhibited by methionine sulfoximine (MSO). In terms of biological role, glutamine synthetase that catalyzes the ATP-dependent conversion of glutamate and ammonia to glutamine. Its role depends on tissue localization: in the brain, it regulates the levels of toxic ammonia and converts neurotoxic glutamate to harmless glutamine, whereas in the liver, it is one of the enzymes responsible for the removal of ammonia. Plays a key role in ammonium detoxification during erythropoiesis: the glutamine synthetase activity is required to remove ammonium generated by porphobilinogen deaminase (HMBS) during heme biosynthesis to prevent ammonium accumulation and oxidative stress. Essential for proliferation of fetal skin fibroblasts. Independently of its glutamine synthetase activity, required for endothelial cell migration during vascular development. Involved in angiogenesis by regulating membrane localization and activation of the GTPase RHOJ, possibly by promoting RHOJ palmitoylation. May act as a palmitoyltransferase for RHOJ: able to autopalmitoylate and then transfer the palmitoyl group to RHOJ. Plays a role in ribosomal 40S subunit biogenesis. Through the interaction with BEST2, inhibits BEST2 channel activity by affecting the gating at the aperture in the absence of intracellular L-glutamate, but sensitizes BEST2 to intracellular L-glutamate, which promotes the opening of BEST2 and thus relieves its inhibitory effect on BEST2. The protein is Glutamine synthetase of Rattus norvegicus (Rat).